The chain runs to 217 residues: Probable transaldolase (217 aa).

Lysine 83 (schiff-base intermediate with substrate) is an active-site residue.

The protein belongs to the transaldolase family. Type 3B subfamily.

The protein resides in the cytoplasm. It carries out the reaction D-sedoheptulose 7-phosphate + D-glyceraldehyde 3-phosphate = D-erythrose 4-phosphate + beta-D-fructose 6-phosphate. Its pathway is carbohydrate degradation; pentose phosphate pathway; D-glyceraldehyde 3-phosphate and beta-D-fructose 6-phosphate from D-ribose 5-phosphate and D-xylulose 5-phosphate (non-oxidative stage): step 2/3. Its function is as follows. Transaldolase is important for the balance of metabolites in the pentose-phosphate pathway. In Lactiplantibacillus plantarum (strain ATCC BAA-793 / NCIMB 8826 / WCFS1) (Lactobacillus plantarum), this protein is Probable transaldolase.